The following is a 388-amino-acid chain: Succinate--CoA ligase [ADP-forming] subunit beta (388 aa).

An ATP-grasp domain is found at 9–244 (KQLFQKYGVP…LDEEDPFEIE (236 aa)). Residues lysine 46, 53 to 55 (GRG), glutamate 99, leucine 102, and glutamate 107 contribute to the ATP site. The Mg(2+) site is built by asparagine 199 and aspartate 213. Substrate-binding positions include asparagine 265 and 322 to 324 (GIL).

This sequence belongs to the succinate/malate CoA ligase beta subunit family. As to quaternary structure, heterotetramer of two alpha and two beta subunits. Requires Mg(2+) as cofactor.

The enzyme catalyses succinate + ATP + CoA = succinyl-CoA + ADP + phosphate. It catalyses the reaction GTP + succinate + CoA = succinyl-CoA + GDP + phosphate. Its pathway is carbohydrate metabolism; tricarboxylic acid cycle; succinate from succinyl-CoA (ligase route): step 1/1. In terms of biological role, succinyl-CoA synthetase functions in the citric acid cycle (TCA), coupling the hydrolysis of succinyl-CoA to the synthesis of either ATP or GTP and thus represents the only step of substrate-level phosphorylation in the TCA. The beta subunit provides nucleotide specificity of the enzyme and binds the substrate succinate, while the binding sites for coenzyme A and phosphate are found in the alpha subunit. The sequence is that of Succinate--CoA ligase [ADP-forming] subunit beta from Syntrophobacter fumaroxidans (strain DSM 10017 / MPOB).